The following is a 452-amino-acid chain: UPF0210 protein PTH_0987 (452 aa).

This sequence belongs to the UPF0210 family. As to quaternary structure, homodimer.

The protein is UPF0210 protein PTH_0987 of Pelotomaculum thermopropionicum (strain DSM 13744 / JCM 10971 / SI).